The chain runs to 1772 residues: Merozoite surface protein 1 (1772 aa).

A signal peptide spans 1–18 (MKVIGLLFSFVFFAIKCK). A glycan (N-linked (GlcNAc...) asparagine) is linked at Asn-54. The interval 290-319 (TGGQSSTEPGSGGSSASGTSSSGQASAGTG) is disordered. Residues 305 to 319 (ASGTSSSGQASAGTG) show a composition bias toward low complexity. Residues Asn-406 and Asn-646 are each glycosylated (N-linked (GlcNAc...) asparagine). The interval 703–796 (KERMEQGPAI…QPSQAASSTT (94 aa)) is disordered. Low complexity predominate over residues 724-796 (SAESSTDRST…QPSQAASSTT (73 aa)). N-linked (GlcNAc...) asparagine glycosylation occurs at Asn-829. The disordered stretch occupies residues 924-1070 (AAPTPVTPAA…SRAESEEDMP (147 aa)). 2 stretches are compositionally biased toward low complexity: residues 930–946 (TPAA…PDVQ) and 956–1052 (SQQP…NSQS). N-linked (GlcNAc...) asparagine glycans are attached at residues Asn-1018 and Asn-1090. Residues 1362 to 1383 (GAVPGSGTDTRVAGSSVDDNED) form a disordered region. N-linked (GlcNAc...) asparagine glycosylation is found at Asn-1408, Asn-1446, Asn-1541, and Asn-1629. 2 consecutive EGF-like domains span residues 1661–1703 (HVCV…VENN) and 1704–1752 (NPTC…FCSS). Cys-1663 and Cys-1675 are disulfide-bonded. Asn-1680 carries N-linked (GlcNAc...) asparagine glycosylation. Disulfide bonds link Cys-1687-Cys-1699, Cys-1707-Cys-1720, Cys-1714-Cys-1734, and Cys-1736-Cys-1750. The GPI-anchor amidated serine moiety is linked to residue Ser-1751. Residues 1752–1772 (SSSFMGLSILLIITLIVFNIF) constitute a propeptide, removed in mature form.

As to quaternary structure, forms a complex composed of subunits p83, p30, p38, and p42 which remain non-covalently associated; the complex is formed at the merozoite surface prior to egress from host erythrocytes. Post-translationally, the p230 precursor is cleaved by SUB1 prior to merozoite egress into 4 subunits p83, p30, p38, and p42 which remain non-covalently associated. In a second processing step during erythrocyte invasion, p42 is cleaved by SUB2 into p33 and p19; the latter remains attached to the merozoite surface via its GPI-anchor and stays on the surface during the subsequent ring stage.

Its subcellular location is the cell membrane. The protein localises to the secreted. During the asexual blood stage, involved in merozoite egress from host erythrocytes possibly via its interaction with the host cytoskeleton protein spectrin resulting in the destabilization of the host cytoskeleton and thus leading to erythrocyte cell membrane rupture. Involved in the binding to host erythrocytes and is required for host erythrocyte invasion. This is Merozoite surface protein 1 from Plasmodium yoelii yoelii.